The following is a 1518-amino-acid chain: Putative cellulose synthase 2 (1518 aa).

The catalytic stretch occupies residues 1-731 (MYGTWFTTGK…EEKLEKQSFV (731 aa)). The next 3 helical transmembrane spans lie at 24 to 44 (PVWV…SVRI), 71 to 91 (ITVF…VWRL), and 105 to 125 (LAVL…LSYF). Positions 144–237 (QWPSVDVFVP…FAVIFDCDHV (94 aa)) are catalytic subdomain A. The active site involves Asp186. 2 residues coordinate substrate: Asp233 and Asp235. Residues 314-374 (EAVMGIGGFA…GQRVRWARGM (61 aa)) form a catalytic subdomain B region. Asp330 is a catalytic residue. 5 consecutive transmembrane segments (helical) span residues 404-424 (FLFA…LFLG), 427-447 (IIAA…FHSV), 465-485 (IYET…LLQP), 514-534 (ILAG…VWQF), and 543-563 (FILN…SIAV). The region spanning 569-668 (QTRNAPRVSV…ERQVVSMVFG (100 aa)) is the PilZ domain. Residues 732-1518 (LKPVPRSARH…IARDDLTGEL (787 aa)) are cyclic di-GMP binding domain. Positions 765 to 785 (APSPDQSGVTAETPFGDSNTG) are disordered. A compositionally biased stretch (polar residues) spans 768–785 (PDQSGVTAETPFGDSNTG). Residues 1481 to 1501 (ALYLAGLAGAGLAALGVWAWL) form a helical membrane-spanning segment.

In the N-terminal section; belongs to the glycosyltransferase 2 family. The protein in the C-terminal section; belongs to the AcsB/BcsB family.

The protein localises to the cell inner membrane. The enzyme catalyses [(1-&gt;4)-beta-D-glucosyl](n) + UDP-alpha-D-glucose = [(1-&gt;4)-beta-D-glucosyl](n+1) + UDP + H(+). It participates in glycan metabolism; bacterial cellulose biosynthesis. This chain is Putative cellulose synthase 2 (bcsABII-A), found in Komagataeibacter xylinus (Gluconacetobacter xylinus).